Here is a 173-residue protein sequence, read N- to C-terminus: dCTP deaminase, dUMP-forming (173 aa).

DCTP-binding positions include 93–98 (RSSIGR), D111, 119–121 (TLE), and Q138. E121 functions as the Proton donor/acceptor in the catalytic mechanism.

It belongs to the dCTP deaminase family. As to quaternary structure, homotrimer.

It carries out the reaction dCTP + 2 H2O = dUMP + NH4(+) + diphosphate. The protein operates within pyrimidine metabolism; dUMP biosynthesis; dUMP from dCTP: step 1/1. Functionally, bifunctional enzyme that catalyzes both the deamination of dCTP to dUTP and the hydrolysis of dUTP to dUMP without releasing the toxic dUTP intermediate. This is dCTP deaminase, dUMP-forming from Leptospira interrogans serogroup Icterohaemorrhagiae serovar copenhageni (strain Fiocruz L1-130).